A 313-amino-acid chain; its full sequence is MPFSEPGKTKFQVDLRRHLRNQDISDNLVHLICEIAEASKYVINAVRTGDLGVAGTSNLYGEEQLALDVLSDRIIRKRLIHSGVVCNIASEEMDEIFQAQADADGLYSVAYDPLDGSSLVDVNLAVGTIVSIYEGCNLLQKGRNQVAAMYILYGPRVSLVYSVGKGVHEFTMNHLMEYTLSRENVTMKPDGDIYSPGGLRKKYLPETEKFVQHLESKGSKLRYSGGFVPDINQVLMKGKGIFMYPALNGSPNGKLRVLFELNPMAYLIENAGGAATDGKTPILDIEPQSLDQRAPIFIGCSNDVATAMEFMGG.

Mg(2+) is bound by residues Glu-91, Asp-112, Leu-114, and Asp-115. Residues 115 to 118, Tyr-223, and Lys-254 contribute to the substrate site; that span reads DGSS. Glu-260 lines the Mg(2+) pocket.

This sequence belongs to the FBPase class 1 family. In terms of assembly, homotetramer. The cofactor is Mg(2+).

Its subcellular location is the cytoplasm. It catalyses the reaction beta-D-fructose 1,6-bisphosphate + H2O = beta-D-fructose 6-phosphate + phosphate. It functions in the pathway carbohydrate biosynthesis; gluconeogenesis. The chain is Fructose-1,6-bisphosphatase class 1 from Geobacter sulfurreducens (strain ATCC 51573 / DSM 12127 / PCA).